The sequence spans 287 residues: 4-hydroxybenzoate octaprenyltransferase (287 aa).

9 consecutive transmembrane segments (helical) span residues 21 to 41, 44 to 64, 91 to 111, 112 to 132, 139 to 159, 160 to 180, 211 to 231, 235 to 255, and 263 to 283; these read VGIF…AKGA, FKIA…GCIV, VTEA…LVLL, LNRL…VYPF, LPQL…FAAT, VGHV…WPIV, LMIG…GWYL, YWFY…QFLI, and CFAA…GILL.

It belongs to the UbiA prenyltransferase family. The cofactor is Mg(2+).

It localises to the cell inner membrane. It catalyses the reaction all-trans-octaprenyl diphosphate + 4-hydroxybenzoate = 4-hydroxy-3-(all-trans-octaprenyl)benzoate + diphosphate. Its pathway is cofactor biosynthesis; ubiquinone biosynthesis. In terms of biological role, catalyzes the prenylation of para-hydroxybenzoate (PHB) with an all-trans polyprenyl group. Mediates the second step in the final reaction sequence of ubiquinone-8 (UQ-8) biosynthesis, which is the condensation of the polyisoprenoid side chain with PHB, generating the first membrane-bound Q intermediate 3-octaprenyl-4-hydroxybenzoate. This Coxiella burnetii (strain RSA 331 / Henzerling II) protein is 4-hydroxybenzoate octaprenyltransferase.